The chain runs to 29 residues: Kunitz-type trypsin inhibitor IVTI (29 aa).

This sequence belongs to the protease inhibitor I3 (leguminous Kunitz-type inhibitor) family. In terms of assembly, monomer and dimer.

In terms of biological role, inhibits bovine trypsin but not chymotrypsin. Also inhibits trypsin-like enzymes from midgut of several lepidopteran species and inhibits larval development in those species. Has fungicidal activity against yeast C.buinensis. Has a bacteriostatic effect against E.coli. Is not cytotoxic. The chain is Kunitz-type trypsin inhibitor IVTI from Inga vera (River koko).